We begin with the raw amino-acid sequence, 134 residues long: UPF0412 protein YaaI (134 aa).

Positions 1–23 (MRSVLTISVGLLFGLALSSVAHA) are cleaved as a signal peptide.

The protein belongs to the UPF0412 family.

This is UPF0412 protein YaaI from Salmonella typhimurium (strain LT2 / SGSC1412 / ATCC 700720).